The chain runs to 630 residues: Probable potassium transport system protein Kup 1 (630 aa).

12 consecutive transmembrane segments (helical) span residues 15-35 (FAAL…TSPL), 59-79 (LSLI…TFIM), 109-129 (WIMI…MVTP), 145-165 (PALK…LFFV), 173-193 (VGAF…LLGV), 223-243 (LVAM…YADM), 255-275 (WFAF…ALIL), 297-317 (LVGL…SGAF), 345-365 (IYLP…VLGF), 374-394 (AYGI…TVVV), 405-425 (AGLL…ANIL), and 427-447 (IPDG…LMTT).

The protein belongs to the HAK/KUP transporter (TC 2.A.72) family.

The protein resides in the cell inner membrane. It carries out the reaction K(+)(in) + H(+)(in) = K(+)(out) + H(+)(out). Transport of potassium into the cell. Likely operates as a K(+):H(+) symporter. The polypeptide is Probable potassium transport system protein Kup 1 (Dechloromonas aromatica (strain RCB)).